We begin with the raw amino-acid sequence, 399 residues long: Tyrosine--tRNA ligase (399 aa).

Residues 44–53 (PTAPDLHLGH) carry the 'HIGH' region motif. Residues 229–233 (KMSKS) carry the 'KMSKS' region motif. Position 232 (K232) interacts with ATP. One can recognise an S4 RNA-binding domain in the interval 338 to 398 (ISITKALVDC…GKRKFAKLKV (61 aa)).

Belongs to the class-I aminoacyl-tRNA synthetase family. TyrS type 2 subfamily. Homodimer.

The protein localises to the cytoplasm. It carries out the reaction tRNA(Tyr) + L-tyrosine + ATP = L-tyrosyl-tRNA(Tyr) + AMP + diphosphate + H(+). Its function is as follows. Catalyzes the attachment of tyrosine to tRNA(Tyr) in a two-step reaction: tyrosine is first activated by ATP to form Tyr-AMP and then transferred to the acceptor end of tRNA(Tyr). The sequence is that of Tyrosine--tRNA ligase from Sulfurimonas denitrificans (strain ATCC 33889 / DSM 1251) (Thiomicrospira denitrificans (strain ATCC 33889 / DSM 1251)).